A 494-amino-acid chain; its full sequence is MQDHASSKDDRALQRTRHWISGYSPDVRIQERGVLVSVGDGVAWIKGLPSARMEELLDFEDGSLGMVFDLCEELVGAVILQQTGSLTAGQEVHRTRRPLGLLAHDSLLGRVIDPTGRPLDGQSPLHEGAWVNLNSPTPAIVERDFVHEPLYTGIRMIDAMIPIGRGQRQLIIGDEGLGRTSIALNAVLHQKDKDVRCIYVLIGQKRGAAVNVMQTLQRHGADAYTTLVVADAGSPPGLQYLAPFAGSALASHWMRQGRHVLMVYDDLSSHARSYRELSLLLRRPPGREAYPGDVFSVHARLLEQATCLSPEQGGGSLTALPIAETQQGEIAAYIPTNLISITDGQIYLERSLFAAGVRPAIDVGRSVSRIGGKAQHPAIKHEAIRMKLDYSRFLELEIFTRFGAKLDPGMQTVIKRGQLLRELLKQDRFERFSPEQELAWMIAYNEGLLDEHPLTDIPAALLQIQSRLDARLSLETPREDWTAALQKMLTTADV.

This sequence belongs to the ATPase alpha/beta chains family. F-type ATPases have 2 components, CF(1) - the catalytic core - and CF(0) - the membrane proton channel. CF(1) has five subunits: alpha(3), beta(3), gamma(1), delta(1), epsilon(1). CF(0) has three main subunits: a(1), b(2) and c(9-12). The alpha and beta chains form an alternating ring which encloses part of the gamma chain. CF(1) is attached to CF(0) by a central stalk formed by the gamma and epsilon chains, while a peripheral stalk is formed by the delta and b chains.

It is found in the cell inner membrane. It carries out the reaction ATP + H2O + 4 H(+)(in) = ADP + phosphate + 5 H(+)(out). Produces ATP from ADP in the presence of a proton gradient across the membrane. The alpha chain is a regulatory subunit. This Hahella chejuensis (strain KCTC 2396) protein is ATP synthase subunit alpha 1.